A 330-amino-acid polypeptide reads, in one-letter code: Fructose-1,6-bisphosphatase class 1 (330 aa).

Mg(2+)-binding residues include Glu-84, Asp-103, Leu-105, and Asp-106. Substrate-binding positions include 106 to 109 (DGSS), Asn-196, and Lys-262. A Mg(2+)-binding site is contributed by Glu-268.

The protein belongs to the FBPase class 1 family. Homotetramer. It depends on Mg(2+) as a cofactor.

Its subcellular location is the cytoplasm. It carries out the reaction beta-D-fructose 1,6-bisphosphate + H2O = beta-D-fructose 6-phosphate + phosphate. It participates in carbohydrate biosynthesis; gluconeogenesis. The polypeptide is Fructose-1,6-bisphosphatase class 1 (Shewanella sp. (strain W3-18-1)).